A 380-amino-acid chain; its full sequence is Queuine tRNA-ribosyltransferase (380 aa).

The active-site Proton acceptor is the aspartate 96. Substrate is bound by residues aspartate 96–phenylalanine 100, aspartate 150, glutamine 193, and glycine 220. Positions glycine 251–serine 257 are RNA binding. Aspartate 270 serves as the catalytic Nucleophile. The tract at residues threonine 275 to arginine 279 is RNA binding; important for wobble base 34 recognition. Zn(2+) contacts are provided by cysteine 308, cysteine 310, cysteine 313, and histidine 339.

The protein belongs to the queuine tRNA-ribosyltransferase family. Homodimer. Within each dimer, one monomer is responsible for RNA recognition and catalysis, while the other monomer binds to the replacement base PreQ1. The cofactor is Zn(2+).

It carries out the reaction 7-aminomethyl-7-carbaguanine + guanosine(34) in tRNA = 7-aminomethyl-7-carbaguanosine(34) in tRNA + guanine. It participates in tRNA modification; tRNA-queuosine biosynthesis. Its function is as follows. Catalyzes the base-exchange of a guanine (G) residue with the queuine precursor 7-aminomethyl-7-deazaguanine (PreQ1) at position 34 (anticodon wobble position) in tRNAs with GU(N) anticodons (tRNA-Asp, -Asn, -His and -Tyr). Catalysis occurs through a double-displacement mechanism. The nucleophile active site attacks the C1' of nucleotide 34 to detach the guanine base from the RNA, forming a covalent enzyme-RNA intermediate. The proton acceptor active site deprotonates the incoming PreQ1, allowing a nucleophilic attack on the C1' of the ribose to form the product. After dissociation, two additional enzymatic reactions on the tRNA convert PreQ1 to queuine (Q), resulting in the hypermodified nucleoside queuosine (7-(((4,5-cis-dihydroxy-2-cyclopenten-1-yl)amino)methyl)-7-deazaguanosine). This is Queuine tRNA-ribosyltransferase from Streptococcus pyogenes serotype M3 (strain ATCC BAA-595 / MGAS315).